The following is a 347-amino-acid chain: N-acetyl-gamma-glutamyl-phosphate reductase (347 aa).

Cysteine 155 is a catalytic residue.

The protein belongs to the NAGSA dehydrogenase family. Type 1 subfamily.

It localises to the cytoplasm. The enzyme catalyses N-acetyl-L-glutamate 5-semialdehyde + phosphate + NADP(+) = N-acetyl-L-glutamyl 5-phosphate + NADPH + H(+). It functions in the pathway amino-acid biosynthesis; L-arginine biosynthesis; N(2)-acetyl-L-ornithine from L-glutamate: step 3/4. Its function is as follows. Catalyzes the NADPH-dependent reduction of N-acetyl-5-glutamyl phosphate to yield N-acetyl-L-glutamate 5-semialdehyde. This Akkermansia muciniphila (strain ATCC BAA-835 / DSM 22959 / JCM 33894 / BCRC 81048 / CCUG 64013 / CIP 107961 / Muc) protein is N-acetyl-gamma-glutamyl-phosphate reductase.